A 2234-amino-acid chain; its full sequence is RNA-directed RNA polymerase L (2234 aa).

Residues 26–283 (ITVVTSQTEM…INLSDEKLSC (258 aa)) form an endonuclease region. Mn(2+) contacts are provided by Glu-51, Asp-89, and Glu-102. Lys-115 is a catalytic residue. Residues 879 to 891 (KRDDHMKDSEDSK) are compositionally biased toward basic and acidic residues. 2 disordered regions span residues 879-898 (KRDD…SSDL) and 927-949 (KLKE…QQKR). Positions 935 to 945 (RQSSSGSSLKN) are enriched in polar residues. Positions 1184 to 1383 (MEMKMSVNLG…FISSKFNKFV (200 aa)) constitute a RdRp catalytic domain. Asp-1342 is a Mg(2+) binding site.

This sequence belongs to the Bunyavirales RNA polymerase family. As to quaternary structure, homomultimer; the oligomeric structure is essential for the polymerase activity. Interacts with nucleoprotein N. Interacts with protein Z; this interaction inhibits viral transcription and replication, Z partially blocks the product exit tunnel for the releasing nascent RNA product. It depends on Mn(2+) as a cofactor. Mg(2+) is required as a cofactor.

It localises to the virion. Its subcellular location is the host cytoplasm. It carries out the reaction RNA(n) + a ribonucleoside 5'-triphosphate = RNA(n+1) + diphosphate. Functionally, RNA-dependent RNA polymerase, which is responsible for the replication and transcription of the viral RNA genome using antigenomic RNA as an intermediate. During transcription, synthesizes subgenomic RNAs and assures their capping by a cap-snatching mechanism, which involves the endonuclease activity cleaving the host capped pre-mRNAs. These short capped RNAs are then used as primers for viral transcription. The 3'-end of subgenomic mRNAs molecules are heterogeneous and not polyadenylated. The replicase function is to direct synthesis of antigenomic and genomic RNA which are encapsidated and non capped. As a consequence of the use of the same enzyme for both transcription and replication, these mechanisms need to be well coordinated. These processes may be regulated by proteins N and Z in a dose-dependent manner. Z protein inhibits the viral polymerase L und thus the viral transcription and RNA synthesis. The chain is RNA-directed RNA polymerase L from Bolomys (OLVV).